Consider the following 272-residue polypeptide: Deaminated glutathione amidase (272 aa).

The 253-residue stretch at 1–253 (MKPYLAAALQ…PGLAIAEINP (253 aa)) folds into the CN hydrolase domain. Residue Glu43 is the Proton acceptor of the active site. Catalysis depends on Lys115, which acts as the Proton donor. The active-site Nucleophile is the Cys158.

Belongs to the carbon-nitrogen hydrolase superfamily. NIT1/NIT2 family.

It carries out the reaction N-(4-oxoglutaryl)-L-cysteinylglycine + H2O = L-cysteinylglycine + 2-oxoglutarate. Functionally, hydrolyzes deaminated glutathione (dGSH, 2-oxoglutaramate) to alpha-ketoglutarate (alpha-KG) and cysteinylglycine (specific activity 7.77 umol/min/mg), hydrolyzes alpha-ketoglutaramate (a-KGM, specific activity 2.13 umol/min/mg), has no activity on glutathione or L-glutamine. May function as a metabolite repair enzyme. The chain is Deaminated glutathione amidase from Synechocystis sp. (strain PCC 6803 / GT-S).